A 156-amino-acid chain; its full sequence is MDIRKIKKLIELVEESGISELEISEGEESVRISRAAPAASFPVMQQAYAAPMMQQPAQSNAAAPATVPSMEAPAAAEISGHIVRSPMVGTFYRTPSPDAKAFIEVGQKVNVGDTLCIVEAMKMMNQIEADKSGTVKAILVESGQPVEFDEPLVVIE.

A Biotinyl-binding domain is found at 73–156 (PAAAEISGHI…EFDEPLVVIE (84 aa)). Residue K122 is modified to N6-biotinyllysine.

As to quaternary structure, homodimer.

It participates in lipid metabolism; fatty acid biosynthesis. Functionally, this protein is a component of the acetyl coenzyme A carboxylase complex; first, biotin carboxylase catalyzes the carboxylation of the carrier protein and then the transcarboxylase transfers the carboxyl group to form malonyl-CoA. This Escherichia coli O6:H1 (strain CFT073 / ATCC 700928 / UPEC) protein is Biotin carboxyl carrier protein of acetyl-CoA carboxylase (accB).